The sequence spans 1986 residues: Protein Shroom3 (1986 aa).

The disordered stretch occupies residues 1-21; the sequence is MKTPENLEEPSATPNPSRTPT. Residues 24–109 enclose the PDZ domain; it reads FVYLEALLEG…TLRLVVRRDV (86 aa). Disordered regions lie at residues 152 to 199, 211 to 239, 265 to 285, 342 to 463, and 564 to 1055; these read CSEP…SSTS, RSPD…LLSP, TSSS…RSGS, QGCA…QPLL, and NEDS…RRIF. Ser212 carries the phosphoserine modification. Composition is skewed to polar residues over residues 357-376 and 415-425; these read PSPS…TDNL and PQTNSSGSQKT. The span at 430 to 440 shows a compositional bias: basic and acidic residues; sequence DQLHTVPERSP. A phosphoserine mark is found at Ser439 and Ser443. Residues 595–607 are compositionally biased toward polar residues; it reads ACSNHHSLSSPQA. The span at 630–645 shows a compositional bias: basic and acidic residues; sequence QEDHNANLRQKVEREG. Polar residues predominate over residues 653 to 677; it reads NSGRTRSAFSSLQNIPESLRRQSNV. Positions 747–761 are enriched in low complexity; that stretch reads SGASQRRLSSSSSAA. Over residues 774–785 the composition is skewed to basic and acidic residues; sequence KVSRIEEREQGR. Composition is skewed to low complexity over residues 796-814 and 865-874; these read YGPG…TSSS and DGRGPPARGG. The residue at position 888 (Ser888) is a Phosphoserine. Residues 895–908 are compositionally biased toward basic and acidic residues; the sequence is EAEREASWSEDRPG. The residue at position 909 (Thr909) is a Phosphothreonine. Residues Ser912 and Ser969 each carry the phosphoserine modification. Residues 927–1023 form the ASD1 domain; it reads IKDAQSRVLG…SEPEKMNEVG (97 aa). A compositionally biased stretch (basic and acidic residues) spans 1004 to 1020; the sequence is LTVEQKKRSYSEPEKMN. Phosphoserine occurs at positions 1063 and 1066. Disordered stretches follow at residues 1083–1102, 1107–1223, 1304–1425, and 1446–1654; these read YIQR…PEAG, AQSA…AEDL, ATVA…PPWV, and ANLK…KTSE. Residues 1114-1127 are compositionally biased toward low complexity; that stretch reads AGPAAPDGPGLASA. Residues 1134-1146 show a composition bias toward basic and acidic residues; it reads REPEALPRKEHTH. A phosphoserine mark is found at Trp1175, Val1179, and Ser1219. The span at 1307-1318 shows a compositional bias: low complexity; that stretch reads ASSAPPESSGAA. A phosphoserine mark is found at Ser1350 and Ser1354. Polar residues predominate over residues 1366 to 1399; sequence YRSQLAMDQQTGQQPPSSPASAVTQPTSPRSPEL. The segment covering 1455–1469 has biased composition (low complexity); it reads PSRPSSCSTSDPDTP. Residues 1513–1524 are compositionally biased toward pro residues; it reads LPPPPPPSPPSE. Residues 1581–1630 show a composition bias toward polar residues; sequence EGSQIMTATPPQTSAKGSEAESNTPSSASAQPQLNGSPGKQLCPSQTRNL. The segment covering 1634–1654 has biased composition (basic and acidic residues); that stretch reads PVERTQDLGKKTHAEPQKTSE. The ASD2 domain maps to 1659–1947; it reads EALAKEIVHQ…QVRCLLESLP (289 aa). Residues 1844–1890 are a coiled coil; it reads RLARVENVLRGLGEDASKEERSSLNEKRKVLAGQHEDARELKENLDR.

Belongs to the shroom family. Interacts with F-actin. Interacts with ROCK1.

The protein resides in the cell junction. Its subcellular location is the adherens junction. It is found in the cytoplasm. The protein localises to the cytoskeleton. It localises to the apical cell membrane. In terms of biological role, controls cell shape changes in the neuroepithelium during neural tube closure. Induces apical constriction in epithelial cells by promoting the apical accumulation of F-actin and myosin II, and probably by bundling stress fibers. Induces apicobasal cell elongation by redistributing gamma-tubulin and directing the assembly of robust apicobasal microtubule arrays. This is Protein Shroom3 (Shroom3) from Mus musculus (Mouse).